A 398-amino-acid chain; its full sequence is Acetate kinase (398 aa).

Mg(2+) is bound at residue Asn7. Residue Lys14 coordinates ATP. Position 92 (Arg92) interacts with substrate. The Proton donor/acceptor role is filled by Asp149. ATP-binding positions include 209-213 (HLGNG), 284-286 (DFR), and 332-336 (GVGEN). Glu385 is a binding site for Mg(2+).

The protein belongs to the acetokinase family. As to quaternary structure, homodimer. Mg(2+) serves as cofactor. Requires Mn(2+) as cofactor.

It is found in the cytoplasm. The catalysed reaction is acetate + ATP = acetyl phosphate + ADP. It functions in the pathway metabolic intermediate biosynthesis; acetyl-CoA biosynthesis; acetyl-CoA from acetate: step 1/2. Catalyzes the formation of acetyl phosphate from acetate and ATP. Can also catalyze the reverse reaction. The sequence is that of Acetate kinase from Clostridioides difficile (strain 630) (Peptoclostridium difficile).